The sequence spans 345 residues: Phosphoribosylformylglycinamidine cyclo-ligase (345 aa).

The protein belongs to the AIR synthase family.

It localises to the cytoplasm. It carries out the reaction 2-formamido-N(1)-(5-O-phospho-beta-D-ribosyl)acetamidine + ATP = 5-amino-1-(5-phospho-beta-D-ribosyl)imidazole + ADP + phosphate + H(+). Its pathway is purine metabolism; IMP biosynthesis via de novo pathway; 5-amino-1-(5-phospho-D-ribosyl)imidazole from N(2)-formyl-N(1)-(5-phospho-D-ribosyl)glycinamide: step 2/2. The sequence is that of Phosphoribosylformylglycinamidine cyclo-ligase from Lactobacillus acidophilus (strain ATCC 700396 / NCK56 / N2 / NCFM).